The sequence spans 499 residues: tRNA-specific adenosine deaminase 1 (499 aa).

The 436-residue stretch at 63-498 (SMGTGTKCIG…IRNPPDYHQF (436 aa)) folds into the A to I editase domain. Residue His-87 participates in Zn(2+) binding. Glu-89 functions as the Proton donor in the catalytic mechanism. Arg-93 and Arg-94 together coordinate 1D-myo-inositol hexakisphosphate. Residue Cys-142 participates in Zn(2+) binding. Disordered stretches follow at residues 170–194 (PVQETENLEDSKDKRNCEDPASPVA) and 212–237 (HHGTQESGPVKPDVSSSDLTKEEPDA). Residues 178–187 (EDSKDKRNCE) are compositionally biased toward basic and acidic residues. Phosphoserine is present on Ser-191. Cys-294 contacts Zn(2+). The 1D-myo-inositol hexakisphosphate site is built by Lys-297, Arg-300, Lys-430, and Lys-466.

This sequence belongs to the ADAT1 family. Requires 1D-myo-inositol hexakisphosphate as cofactor.

The enzyme catalyses adenosine(37) in tRNA(Ala) + H2O + H(+) = inosine(37) in tRNA(Ala) + NH4(+). Specifically deaminates adenosine-37 to inosine in tRNA-Ala. The sequence is that of tRNA-specific adenosine deaminase 1 (Adat1) from Mus musculus (Mouse).